The chain runs to 520 residues: MKPSSASRFSLTFSHFLTLYCLLTQTHVAQGSHQWQSPIKTVVVLVLENRSFDHLLGWMKNSVNPTINGVTGQECNPVPNSTQTICFTSDAEFVDPDPGHSFEAVEQQVFGSGPGQIPSMMGFVEQALSMPGNLSETVMKGFRPEAVPVYAELVKEFAVFDRWFSSIPGPTQPNRLFVYSATSHGSTSHVKKQLAQGYPQKTIFDSLHSNDIDFGIYFQNIPTTLFYRNLRQLKYIFNLHQYDLKFKKDAAKGKLPSLTVIEPRYFDLKGLPANDDHPSHDVANGQKLVKEVYEALRSSPQWNETLLVITYDEHGGFYDHVKTPYVGIPNPDGNTGPAPGFFKFDRLGVRVPTIMVSPWIQKGTVVSEAKGPTESSEYEHSSIPATIKKLFNLSSNFLTHRDAWAATFEDVVSHLTTPRTDCPMTLPEVAPMRATEPKEDAALSEFQGEVVQLAAVLNGDHFLSSFPEEIGKKMTVKQAHEYVKGATSRFIRASKEAMKLGADKSAIVDMRSSLTTRPHN.

Positions 1 to 31 (MKPSSASRFSLTFSHFLTLYCLLTQTHVAQG) are cleaved as a signal peptide.

Belongs to the bacterial phospholipase C family. Expressed in roots, leaves, stems, flowers and siliques.

It is found in the secreted. The chain is Non-specific phospholipase C6 (NPC6) from Arabidopsis thaliana (Mouse-ear cress).